The following is a 118-amino-acid chain: Large ribosomal subunit protein uL22 (118 aa).

Belongs to the universal ribosomal protein uL22 family. In terms of assembly, part of the 50S ribosomal subunit.

In terms of biological role, this protein binds specifically to 23S rRNA; its binding is stimulated by other ribosomal proteins, e.g. L4, L17, and L20. It is important during the early stages of 50S assembly. It makes multiple contacts with different domains of the 23S rRNA in the assembled 50S subunit and ribosome. The globular domain of the protein is located near the polypeptide exit tunnel on the outside of the subunit, while an extended beta-hairpin is found that lines the wall of the exit tunnel in the center of the 70S ribosome. The sequence is that of Large ribosomal subunit protein uL22 from Treponema denticola (strain ATCC 35405 / DSM 14222 / CIP 103919 / JCM 8153 / KCTC 15104).